The following is a 168-amino-acid chain: uncharacterized protein (168 aa).

Residues 1–15 (MKRIISSSKSLKQLS) show a composition bias toward low complexity. Positions 1 to 107 (MKRIISSSKS…NNNNNNNNNN (107 aa)) are disordered. Residues 33–47 (SDSDSDSDSDSDSDS) are compositionally biased toward acidic residues. The span at 48–107 (DSNSNSNSNSNSNSNSNSNSNSNSNSNNNNNNTNNNNNNNNNNNNNNNNNNNNNNNNNNN) shows a compositional bias: low complexity.

This is an uncharacterized protein from Dictyostelium discoideum (Social amoeba).